The primary structure comprises 108 residues: uncharacterized protein (108 aa).

Residues 81–108 (FKCLDSPPPVPPSSSQGEDEENTVDSQY) form a disordered region. Over residues 97–108 (GEDEENTVDSQY) the composition is skewed to acidic residues.

This is an uncharacterized protein from Saccharomyces cerevisiae (strain ATCC 204508 / S288c) (Baker's yeast).